Reading from the N-terminus, the 187-residue chain is Ion-translocating oxidoreductase complex subunit B (187 aa).

The hydrophobic stretch occupies residues 1–23 (MIAAAASMSALGLGLGYLLGAAA). One can recognise a 4Fe-4S domain in the interval 29–88 (ETPPIVEEIAKILPGTNCGACGFPGCNGLAEAMAEGNAPVTACTPGGRDVALALAEIVTV). The [4Fe-4S] cluster site is built by cysteine 46, cysteine 49, cysteine 54, cysteine 71, cysteine 112, cysteine 115, cysteine 118, cysteine 122, cysteine 142, cysteine 145, cysteine 148, and cysteine 152. 2 4Fe-4S ferredoxin-type domains span residues 103 to 132 (MVAFVFEDHCTGCQKCFKRCPTDAIVGGAK) and 133 to 162 (QIHTVVMDACIGCDACIEVCPTEAIVSRVK).

It belongs to the 4Fe4S bacterial-type ferredoxin family. RnfB subfamily. As to quaternary structure, the complex is composed of six subunits: RnfA, RnfB, RnfC, RnfD, RnfE and RnfG. The cofactor is [4Fe-4S] cluster.

It localises to the cellular chromatophore membrane. Functionally, part of a membrane-bound complex that couples electron transfer with translocation of ions across the membrane. Required for nitrogen fixation. Involved in electron transfer to nitrogenase. The sequence is that of Ion-translocating oxidoreductase complex subunit B from Rhodobacter capsulatus (Rhodopseudomonas capsulata).